We begin with the raw amino-acid sequence, 295 residues long: Acetylglutamate kinase (295 aa).

Residues Gly-66–Gly-67, Arg-88, and Asn-193 contribute to the substrate site.

This sequence belongs to the acetylglutamate kinase family. ArgB subfamily.

The protein localises to the cytoplasm. The enzyme catalyses N-acetyl-L-glutamate + ATP = N-acetyl-L-glutamyl 5-phosphate + ADP. It functions in the pathway amino-acid biosynthesis; L-arginine biosynthesis; N(2)-acetyl-L-ornithine from L-glutamate: step 2/4. In terms of biological role, catalyzes the ATP-dependent phosphorylation of N-acetyl-L-glutamate. The sequence is that of Acetylglutamate kinase from Rhizobium johnstonii (strain DSM 114642 / LMG 32736 / 3841) (Rhizobium leguminosarum bv. viciae).